Reading from the N-terminus, the 35-residue chain is Photosystem II reaction center protein Psb30 (35 aa).

Residues 6–26 (VIVQLVFLALIITTGPVIIVY) traverse the membrane as a helical segment.

This sequence belongs to the Psb30/Ycf12 family. As to quaternary structure, PSII is composed of 1 copy each of membrane proteins PsbA, PsbB, PsbC, PsbD, PsbE, PsbF, PsbH, PsbI, PsbJ, PsbK, PsbL, PsbM, PsbT, PsbY, PsbZ, Psb30/Ycf12, peripheral proteins of the oxygen-evolving complex and a large number of cofactors. It forms dimeric complexes.

It is found in the plastid. The protein resides in the chloroplast thylakoid membrane. In terms of biological role, a core subunit of photosystem II (PSII), probably helps stabilize the reaction center. The chain is Photosystem II reaction center protein Psb30 from Cyanidium caldarium (Red alga).